Reading from the N-terminus, the 147-residue chain is Large ribosomal subunit protein uL15 (147 aa).

The disordered stretch occupies residues 21–49; sequence RVGRGEGSKGKTAGRGTKGTKARAPVRPG.

This sequence belongs to the universal ribosomal protein uL15 family. In terms of assembly, part of the 50S ribosomal subunit.

Binds to the 23S rRNA. The chain is Large ribosomal subunit protein uL15 from Tropheryma whipplei (strain TW08/27) (Whipple's bacillus).